The primary structure comprises 202 residues: Adenylyl-sulfate kinase (202 aa).

ATP is bound at residue 35 to 42; sequence GLSGSGKS. Serine 109 functions as the Phosphoserine intermediate in the catalytic mechanism.

The protein belongs to the APS kinase family.

It carries out the reaction adenosine 5'-phosphosulfate + ATP = 3'-phosphoadenylyl sulfate + ADP + H(+). It participates in sulfur metabolism; hydrogen sulfide biosynthesis; sulfite from sulfate: step 2/3. Its function is as follows. Catalyzes the synthesis of activated sulfate. The sequence is that of Adenylyl-sulfate kinase from Bacteroides fragilis (strain YCH46).